An 81-amino-acid polypeptide reads, in one-letter code: Protein RALF-like 6 (81 aa).

Positions 1–29 (MAAHKKSHIRIFFVSVMIILSLFSGFGEG) are cleaved as a signal peptide. 2 cysteine pairs are disulfide-bonded: C46–C54 and C66–C72.

Belongs to the plant rapid alkalinization factor (RALF) family.

It localises to the secreted. Cell signaling peptide that may regulate plant stress, growth, and development. Mediates a rapid alkalinization of extracellular space by mediating a transient increase in the cytoplasmic Ca(2+) concentration leading to a calcium-dependent signaling events through a cell surface receptor and a concomitant activation of some intracellular mitogen-activated protein kinases. In Arabidopsis thaliana (Mouse-ear cress), this protein is Protein RALF-like 6 (RALFL6).